The following is a 311-amino-acid chain: Transcription factor BIM2 (311 aa).

Disordered regions lie at residues 1 to 60 and 271 to 311; these read MRTG…RRSK and ANQG…MKTL. 2 stretches are compositionally biased toward basic and acidic residues: residues 33 to 44 and 51 to 60; these read SNRDSKENDKAS and SVTEQRRRSK. In terms of domain architecture, bHLH spans 45-95; that stretch reads AIRSKHSVTEQRRRSKINERFQILRELIPNSEQKRDTASFLLEVIDYVQYL.

As to quaternary structure, homodimer. Interacts with the N-terminus of BZR2/BES1. In terms of tissue distribution, expressed constitutively in roots, leaves, stems, and flowers.

The protein localises to the nucleus. In terms of biological role, positive brassinosteroid-signaling protein. The polypeptide is Transcription factor BIM2 (BIM2) (Arabidopsis thaliana (Mouse-ear cress)).